Consider the following 361-residue polypeptide: Protein-L-isoaspartate O-methyltransferase domain-containing protein 2 (361 aa).

Gly2 carries the N-myristoyl glycine lipid modification. The active site involves Ser64. AdoMet binding motif stretches follow at residues 85–94 (LNLGSGTGYL), 160–164 (YDRVY), and 181–191 (LKVGGILVMPL). The segment at 240–250 (VRSLQDLARIA) is BC-box. The disordered stretch occupies residues 303–336 (SNPSDDNSCEDLEEERREEEEKTPPETKPDPPVN). Residues 309–320 (NSCEDLEEERRE) are compositionally biased toward acidic residues. Residues 321–331 (EEEKTPPETKP) show a composition bias toward basic and acidic residues. A CUL-box region spans residues 345–348 (LPLP).

This sequence belongs to the methyltransferase superfamily. L-isoaspartyl/D-aspartyl protein methyltransferase family.

It is found in the cytoplasm. In terms of biological role, may act as a substrate recognition component of an ECS (Elongin BC-CUL5-SOCS-box protein) E3 ubiquitin ligase complex which mediates the ubiquitination and subsequent proteasomal degradation of target proteins. May bind to the methyltransferase cofactor S-adenosylmethionine (AdoMet) via the N-terminal AdoMet binding motif, but probably does not display methyltransferase activity. The chain is Protein-L-isoaspartate O-methyltransferase domain-containing protein 2 (PCMTD2) from Homo sapiens (Human).